The following is a 556-amino-acid chain: Polypeptide N-acetylgalactosaminyltransferase 13 (556 aa).

Over 1 to 4 (MRRF) the chain is Cytoplasmic. A helical; Signal-anchor for type II membrane protein transmembrane segment spans residues 5 to 27 (VYCKVVLATSLMWVLVDVFLLLY). At 28–556 (FSECNKCDDK…WLLRNMTLGT (529 aa)) the chain is on the lumenal side. N-linked (GlcNAc...) asparagine glycans are attached at residues Asn94 and Asn116. Disulfide bonds link Cys105-Cys338, Cys329-Cys407, Cys441-Cys458, Cys481-Cys496, and Cys522-Cys539. A catalytic subdomain A region spans residues 114–224 (LPNTSVVIVF…LGWLEPLLAR (111 aa)). Positions 155 and 185 each coordinate substrate. Mn(2+) is bound by residues Asp208 and His210. Residues 284-346 (PVRTPTMAGG…TCSHVGHVFR (63 aa)) form a catalytic subdomain B region. Trp315 is a binding site for substrate. His343 is a binding site for Mn(2+). Substrate contacts are provided by Arg346 and Tyr351. The 123-residue stretch at 428 to 550 (YSLGEIRNVE…GSRSQQWLLR (123 aa)) folds into the Ricin B-type lectin domain. Residue Asn551 is glycosylated (N-linked (GlcNAc...) asparagine).

Belongs to the glycosyltransferase 2 family. GalNAc-T subfamily. Mn(2+) serves as cofactor. In terms of tissue distribution, specifically expressed in neuronal cells. Not expressed in glial cells such as astrocytes. Expressed at low level.

Its subcellular location is the golgi apparatus membrane. It carries out the reaction L-seryl-[protein] + UDP-N-acetyl-alpha-D-galactosamine = a 3-O-[N-acetyl-alpha-D-galactosaminyl]-L-seryl-[protein] + UDP + H(+). It catalyses the reaction L-threonyl-[protein] + UDP-N-acetyl-alpha-D-galactosamine = a 3-O-[N-acetyl-alpha-D-galactosaminyl]-L-threonyl-[protein] + UDP + H(+). The protein operates within protein modification; protein glycosylation. Catalyzes the initial reaction in O-linked oligosaccharide biosynthesis, the transfer of an N-acetyl-D-galactosamine (GalNAc) residue from UDP-GalNAc to a serine or threonine residue on the protein receptor. Generates GalNAc-O-Ser/Thr structure also known as Tn antigen, which itself is immunogenic but also serves as a precursor for the synthesis of different mucin-type O-glycan core structures. Contributes to the synthesis of O-linked glycans on mucins and proteoglycans of the central nervous system. Can glycosylate both unmodified peptides and glycopeptides that already contain an O-linked GalNAc sugar. Transfers GalNAc to Thr-/Ser-rich tandem repeats GTTPSPVPTTSTTSAP of MUC5AC. Transfers GalNAc to three consecutive serine/threonine residues on SDC3 forming a triplet-Tn epitope expressed in Purkinje cells of the developing brain. May promote neurogenesis through glycosylation and stabilization of PDPN. This Mus musculus (Mouse) protein is Polypeptide N-acetylgalactosaminyltransferase 13 (Galnt13).